Here is a 155-residue protein sequence, read N- to C-terminus: uncharacterized protein (155 aa).

The signal sequence occupies residues 1–19 (MPLSKTLVQKLQQAGMAIA).

This is an uncharacterized protein from Haemophilus influenzae (strain ATCC 51907 / DSM 11121 / KW20 / Rd).